The sequence spans 591 residues: Probable indole-3-acetic acid-amido synthetase GH3.11 (591 aa).

Belongs to the IAA-amido conjugating enzyme family. In terms of tissue distribution, expressed in etiolated and green seedlings, roots, callus and highly in flowers.

May catalyze the synthesis of indole-3-acetic acid (IAA)-amino acid conjugates, providing a mechanism for the plant to cope with the presence of excess auxin. The protein is Probable indole-3-acetic acid-amido synthetase GH3.11 (GH3.11) of Oryza sativa subsp. japonica (Rice).